A 584-amino-acid polypeptide reads, in one-letter code: PE-PGRS family protein PE_PGRS11 (584 aa).

The PE domain occupies Met1–Val92. Catalysis depends on His290, which acts as the Tele-phosphohistidine intermediate. Glu365 serves as the catalytic Proton donor/acceptor. The phosphoglycerate mutase stretch occupies residues Tyr384–Pro584.

In the N-terminal section; belongs to the mycobacterial PE family. PGRS subfamily. It in the C-terminal section; belongs to the phosphoglycerate mutase family. As to quaternary structure, interacts with human TLR2. It depends on Mg(2+) as a cofactor.

It is found in the secreted. The protein resides in the cell wall. Its subcellular location is the cell surface. It catalyses the reaction (2R)-2-phosphoglycerate = (2R)-3-phosphoglycerate. In terms of biological role, induces maturation and activation of human dendritic cells (DCs), via TLR2-dependent activation of ERK1/2, p38 MAPK, and NF-kappa-B signaling pathways, and enhances the ability of DCs to stimulate CD4(+) T cells. By activating DCs, could potentially contribute to the initiation of innate immune responses during tuberculosis infection and hence regulate the clinical course of tuberculosis. Involved in resistance to oxidative stress, via TLR2-dependent activation of the PI3K-ERK1/2-NF-kappa-B signaling pathway and expression of COX-2 and Bcl2. Also abolishes H(2)O(2)-triggered activation of p38 MAPK. This Mycobacterium tuberculosis (strain ATCC 25618 / H37Rv) protein is PE-PGRS family protein PE_PGRS11.